We begin with the raw amino-acid sequence, 708 residues long: F-box protein MAX2 homolog A (708 aa).

The 48-residue stretch at 2–49 folds into the F-box domain; it reads ATQLNDLPDVILSNIIAAVTDVRSRNSTSFVCRKWLVLERSTRVSLTL.

Part of a putative SCF (SKP1/Cullin/F-box) ubiquitin ligase complex. Interacts with DAD2. Interacts with KAI2IA in the presence of (-)-germacrene D. In terms of tissue distribution, mainly expressed in fully expanded leaves, lateral roots, axillary and shoot apex, and, to a lower extent, in internodes and nodes.

The protein localises to the nucleus. Component of SCF(ASK-cullin-F-box) E3 ubiquitin ligase complexes, which may mediate the ubiquitination and subsequent proteasomal degradation of target proteins. Is necessary for responses to strigolactones and may be involved in the ubiquitin-mediated degradation of specific proteins that activate axillary growth. Targets probably SMAX1A to degradation upon the formation of an E3 SCF ubiquitin ligase complex (ASK-cullin-F-box) containing MAX2A and KAI2IA in response to (-)-germacrene D in the stigma. The sequence is that of F-box protein MAX2 homolog A from Petunia hybrida (Petunia).